A 504-amino-acid chain; its full sequence is Probable alpha-L-arabinofuranosidase C (504 aa).

Asparagine 152, asparagine 181, and asparagine 269 each carry an N-linked (GlcNAc...) asparagine glycan.

The protein belongs to the glycosyl hydrolase 51 family.

The protein resides in the secreted. The catalysed reaction is Hydrolysis of terminal non-reducing alpha-L-arabinofuranoside residues in alpha-L-arabinosides.. It functions in the pathway glycan metabolism; L-arabinan degradation. Alpha-L-arabinofuranosidase involved in the degradation of arabinoxylan, a major component of plant hemicellulose. Acts only on small linear 1,5-alpha-linked L-arabinofuranosyl oligosaccharides. This chain is Probable alpha-L-arabinofuranosidase C (abfC), found in Aspergillus flavus (strain ATCC 200026 / FGSC A1120 / IAM 13836 / NRRL 3357 / JCM 12722 / SRRC 167).